The chain runs to 493 residues: 3-octaprenyl-4-hydroxybenzoate carboxy-lyase (493 aa).

Position 172 (Asn-172) interacts with Mn(2+). Prenylated FMN-binding positions include 175–177, 189–191, and 194–195; these read IYR, RWL, and RG. Position 238 (Glu-238) interacts with Mn(2+). The active-site Proton donor is Asp-287.

Belongs to the UbiD family. Homohexamer. Prenylated FMN serves as cofactor. The cofactor is Mn(2+).

It is found in the cell membrane. It catalyses the reaction a 4-hydroxy-3-(all-trans-polyprenyl)benzoate + H(+) = a 2-(all-trans-polyprenyl)phenol + CO2. The protein operates within cofactor biosynthesis; ubiquinone biosynthesis. Catalyzes the decarboxylation of 3-octaprenyl-4-hydroxy benzoate to 2-octaprenylphenol, an intermediate step in ubiquinone biosynthesis. The sequence is that of 3-octaprenyl-4-hydroxybenzoate carboxy-lyase from Shewanella sp. (strain ANA-3).